The primary structure comprises 478 residues: Zinc finger and SCAN domain-containing protein 26 (478 aa).

Residue lysine 17 forms a Glycyl lysine isopeptide (Lys-Gly) (interchain with G-Cter in SUMO2) linkage. Positions 51 to 133 constitute an SCAN box domain; that stretch reads CKQFRQLRYE…VVLEDLQLDL (83 aa). Disordered stretches follow at residues 159 to 181 and 200 to 226; these read GVQEQQVRHECEVTKPEKEKGEE and ESSGKISEPMEAHNEGSNLERHQAKPK. 2 stretches are compositionally biased toward basic and acidic residues: residues 164–181 and 207–226; these read QVRHECEVTKPEKEKGEE and EPMEAHNEGSNLERHQAKPK. The segment at 231–253 adopts a C2H2-type 1; degenerate zinc-finger fold; it reads YKCSEREQRFIQHLDLIEHASTH. 7 consecutive C2H2-type zinc fingers follow at residues 282–304, 310–332, 338–360, 366–388, 394–416, 422–444, and 450–472; these read HQCHECGKAFQRSSHLVRHQKIH, YQCNECGKVFSQNAGLLEHLRIH, YLCIHCGKNFRRSSHLNRHQRIH, CECKECGKTFSQALLLTHHQRIH, HQCNECGKAFSLTSDLIRHHRIH, FKCNICQKAFRLNSHLAQHVRIH, and YQCSECGEAFRQRSGLFQHQRYH.

It is found in the nucleus. In terms of biological role, may be involved in transcriptional regulation. The sequence is that of Zinc finger and SCAN domain-containing protein 26 (ZSCAN26) from Homo sapiens (Human).